Consider the following 316-residue polypeptide: MTASFQHISVLLNESIEGLAIKPDGIYIDGTFGRGGHSRTILAQLGPEGRLYSIDRDPQAIAEAQKIDDPRFTIVHGPFSGIAEYAQRYDLVGKVDGVLFDLGVSSPQLDDAERGFSFMKDGPLDMRMDPTSGMPVSAWLAQADLDDITWVIREFGEDKHARRIAKAIVEYRENELNEPLTRTSQLAKLISDAAPKSFKEKKHPATRAFQAFRIYINSELEEIDTALRGASDILAPQGRLSVISFHSLEDRMVKRFMRKESQGPQVPHGIPLTQDQIRALGSAKMKTVGKALKPSDQEVELNPRSRSSVLRVAEKL.

Residues 35 to 37, Asp-55, Phe-79, Asp-101, and Gln-108 contribute to the S-adenosyl-L-methionine site; that span reads GGH. Residues 291-316 are disordered; it reads ALKPSDQEVELNPRSRSSVLRVAEKL.

The protein belongs to the methyltransferase superfamily. RsmH family.

The protein resides in the cytoplasm. It carries out the reaction cytidine(1402) in 16S rRNA + S-adenosyl-L-methionine = N(4)-methylcytidine(1402) in 16S rRNA + S-adenosyl-L-homocysteine + H(+). Its function is as follows. Specifically methylates the N4 position of cytidine in position 1402 (C1402) of 16S rRNA. The chain is Ribosomal RNA small subunit methyltransferase H from Vibrio cholerae serotype O1 (strain ATCC 39315 / El Tor Inaba N16961).